The chain runs to 820 residues: DNA mismatch repair protein MutS (820 aa).

An ATP-binding site is contributed by 615–622; that stretch reads GPNMAGKS.

This sequence belongs to the DNA mismatch repair MutS family.

Its function is as follows. This protein is involved in the repair of mismatches in DNA. It is possible that it carries out the mismatch recognition step. This protein has a weak ATPase activity. The protein is DNA mismatch repair protein MutS of Anaplasma phagocytophilum (strain HZ).